A 164-amino-acid polypeptide reads, in one-letter code: ATP synthase subunit b (164 aa).

Residues 10-32 (SAAMLMLFVLMVYFLNKFLYTPF) form a helical membrane-spanning segment.

Belongs to the ATPase B chain family. F-type ATPases have 2 components, F(1) - the catalytic core - and F(0) - the membrane proton channel. F(1) has five subunits: alpha(3), beta(3), gamma(1), delta(1), epsilon(1). F(0) has three main subunits: a(1), b(2) and c(10-14). The alpha and beta chains form an alternating ring which encloses part of the gamma chain. F(1) is attached to F(0) by a central stalk formed by the gamma and epsilon chains, while a peripheral stalk is formed by the delta and b chains.

The protein localises to the cell inner membrane. F(1)F(0) ATP synthase produces ATP from ADP in the presence of a proton or sodium gradient. F-type ATPases consist of two structural domains, F(1) containing the extramembraneous catalytic core and F(0) containing the membrane proton channel, linked together by a central stalk and a peripheral stalk. During catalysis, ATP synthesis in the catalytic domain of F(1) is coupled via a rotary mechanism of the central stalk subunits to proton translocation. Its function is as follows. Component of the F(0) channel, it forms part of the peripheral stalk, linking F(1) to F(0). The polypeptide is ATP synthase subunit b (Thermotoga maritima (strain ATCC 43589 / DSM 3109 / JCM 10099 / NBRC 100826 / MSB8)).